A 464-amino-acid chain; its full sequence is Soluble pyridine nucleotide transhydrogenase (464 aa).

35-44 (DDRRQVGGNC) contributes to the FAD binding site.

It belongs to the class-I pyridine nucleotide-disulfide oxidoreductase family. FAD serves as cofactor.

It is found in the cytoplasm. The enzyme catalyses NAD(+) + NADPH = NADH + NADP(+). In terms of biological role, conversion of NADPH, generated by peripheral catabolic pathways, to NADH, which can enter the respiratory chain for energy generation. This chain is Soluble pyridine nucleotide transhydrogenase, found in Pseudomonas putida (strain GB-1).